Consider the following 314-residue polypeptide: Solute carrier family 25 member 44 (314 aa).

3 Solcar repeats span residues 18–100 (KKFY…TRKF), 107–210 (SNTV…YAEQ), and 220–302 (PHIV…LKKL). 6 helical membrane passes run 20–42 (FYVFGVAMTMMIRVSVYPFTLIR), 71–90 (AGLYRGFLVNTFTLISGQCY), 113–133 (LVAGGSASLVAQSITVPIDVV), 185–201 (GYVASLLTYIPNSAVWW), 222–239 (IVFQAISGPLAAATASIL), and 278–296 (LSARIISATPSTIVIVVGY).

It belongs to the mitochondrial carrier (TC 2.A.29) family. As to expression, highly expressed in brown adipose tissues compared with other metabolic organs.

Its subcellular location is the mitochondrion membrane. The enzyme catalyses L-valine(in) = L-valine(out). The catalysed reaction is L-leucine(in) = L-leucine(out). Mitochondrial solute transporter which transports branched-chain amino acid (BCAA; valine, leucine and isoleucine) into mitochondria in brown adipose tissue (BAT). BAT is involved in BCAA catabolism and actively utilizes BCAA in the mitochondria for thermogenesis. The chain is Solute carrier family 25 member 44 from Mus musculus (Mouse).